The sequence spans 207 residues: Large ribosomal subunit protein uL4 (207 aa).

The segment at 44-77 (LRQGTHKTKGRSEVRGGGRKPWRQKGTGRARQGS) is disordered. Over residues 60 to 71 (GGRKPWRQKGTG) the composition is skewed to basic residues.

This sequence belongs to the universal ribosomal protein uL4 family. In terms of assembly, part of the 50S ribosomal subunit.

In terms of biological role, one of the primary rRNA binding proteins, this protein initially binds near the 5'-end of the 23S rRNA. It is important during the early stages of 50S assembly. It makes multiple contacts with different domains of the 23S rRNA in the assembled 50S subunit and ribosome. Its function is as follows. Forms part of the polypeptide exit tunnel. This Shouchella clausii (strain KSM-K16) (Alkalihalobacillus clausii) protein is Large ribosomal subunit protein uL4.